A 629-amino-acid polypeptide reads, in one-letter code: Glutamyl-tRNA(Gln) amidotransferase subunit E (629 aa).

A disordered region spans residues 405–426; it reads PEETRRALPDGNTQYMRPLPGK.

This sequence belongs to the GatB/GatE family. GatE subfamily. Heterodimer of GatD and GatE.

The catalysed reaction is L-glutamyl-tRNA(Gln) + L-glutamine + ATP + H2O = L-glutaminyl-tRNA(Gln) + L-glutamate + ADP + phosphate + H(+). Functionally, allows the formation of correctly charged Gln-tRNA(Gln) through the transamidation of misacylated Glu-tRNA(Gln) in organisms which lack glutaminyl-tRNA synthetase. The reaction takes place in the presence of glutamine and ATP through an activated gamma-phospho-Glu-tRNA(Gln). The GatDE system is specific for glutamate and does not act on aspartate. This is Glutamyl-tRNA(Gln) amidotransferase subunit E from Thermococcus sibiricus (strain DSM 12597 / MM 739).